The sequence spans 1372 residues: Paired amphipathic helix protein Sin3-like 1 (1372 aa).

The segment at 1-50 (MKRIRDDVYASGSQFRRPLGSSRGQLCGQSPVHGSGDTEEEEEGGSRRVS) is disordered. PAH domains follow at residues 51-121 (QKLT…LPKG) and 136-206 (KTVE…LPAS). Residues 210–222 (HSAAQHSRSQAQQ) are compositionally biased toward low complexity. 2 disordered regions span residues 210–244 (HSAAQHSRSQAQQYSDRGSDPPLLHQMQVEKERRR) and 272–323 (REQR…SGSA). Positions 272 to 315 (REQRKRLDKENRARRGRDLDDREAGQDNLHHFPEKRKSSRRAEA) are enriched in basic and acidic residues. Positions 331 to 400 (LKSMYKQAFV…DEFNQFFERC (70 aa)) constitute a PAH 3 domain. 3 disordered regions span residues 764-783 (DVNHSTSPNGEAAVSSGGDT), 791-817 (LKSAANGDENSSSGTFKHGIGLLNKDS), and 934-1056 (GLRS…AEGM). A compositionally biased stretch (basic and acidic residues) spans 938 to 957 (DSSKGTRNSDDPEGPSRNEK). Composition is skewed to acidic residues over residues 990–1013 (AEAEVEADAEVENEDDADDVDSEN) and 1028–1042 (SQDEDREEENGEHDE). S1049 is modified (phosphoserine).

In terms of assembly, interacts (via PAH3) with ALY2. Interacts (via PAH2) with TBP1. Interacts with ALY3, GATA21, TRP2, TKI1, VAL1, SKP1B, FBX5 and PUB14.

The protein localises to the nucleus. Its function is as follows. Acts as a transcriptional repressor. A histone deacetylase (HDAC) activity is required for transcription repression. May play a role in telomere stability. The polypeptide is Paired amphipathic helix protein Sin3-like 1 (SNL1) (Arabidopsis thaliana (Mouse-ear cress)).